Consider the following 890-residue polypeptide: Genome polyprotein 2 (890 aa).

The Peptidase C6 domain maps to 135–255 (AFNFAHGYCY…NSDLLNGIVG (121 aa)). Catalysis depends on for helper component proteinase activity residues C143 and H215. The segment at 506–533 (FTTSGDDDSPPPPGDSPSRPPGRSPDRV) is disordered. Positions 515-528 (PPPPGDSPSRPPGR) are enriched in pro residues. Residues 788–816 (ELVQRSMTKLDKEIELFQAQIDSQRRAVT) adopt a coiled-coil conformation.

It belongs to the bymoviruses polyprotein 2 family. In terms of processing, the viral RNA2 of bymoviruses is expressed as a single polyprotein which undergoes post-translational proteolytic processing resulting in the production of at least two individual proteins. The HC-pro cleaves its C-terminus autocatalytically (Potential).

It carries out the reaction Hydrolyzes a Gly-|-Gly bond at its own C-terminus, commonly in the sequence -Tyr-Xaa-Val-Gly-|-Gly, in the processing of the potyviral polyprotein.. The protein is Genome polyprotein 2 of Hordeum vulgare (Barley).